Consider the following 153-residue polypeptide: Succinate dehydrogenase assembly factor 2, mitochondrial (153 aa).

The protein belongs to the SDHAF2 family. In terms of assembly, interacts with the flavoprotein subunit within the SDH catalytic dimer.

It localises to the mitochondrion matrix. Plays an essential role in the assembly of succinate dehydrogenase (SDH), an enzyme complex (also referred to as respiratory complex II) that is a component of both the tricarboxylic acid (TCA) cycle and the mitochondrial electron transport chain, and which couples the oxidation of succinate to fumarate with the reduction of ubiquinone (coenzyme Q) to ubiquinol. Required for flavinylation (covalent attachment of FAD) of the flavoprotein subunit of the SDH catalytic dimer. The polypeptide is Succinate dehydrogenase assembly factor 2, mitochondrial (Candida glabrata (strain ATCC 2001 / BCRC 20586 / JCM 3761 / NBRC 0622 / NRRL Y-65 / CBS 138) (Yeast)).